Reading from the N-terminus, the 660-residue chain is Leucine-rich repeat transmembrane protein FLRT2 (660 aa).

Residues 1 to 35 (MGLQTAKWPSHGTFVLKFWLIMSLGLYSHVSKLLA) form the signal peptide. Disulfide bonds link Cys-36–Cys-42 and Cys-40–Cys-49. Residues 36–67 (CPSVCRCDRNFVYCNERSLTSVPLGIPEGVTV) enclose the LRRNT domain. The Extracellular segment spans residues 36-540 (CPSVCRCDRN…QTTSHTMGSP (505 aa)). 10 LRR repeats span residues 62-87 (PEGV…LHNV), 88-108 (QSVH…MNLP), 109-131 (KNVR…ALAQ), 132-157 (LLKL…AFRE), 159-181 (ISLK…LPVD), 183-202 (QELR…AFQN), 203-228 (LTSL…TFSH), 229-251 (LTKL…DLPG), 252-274 (THLI…AFAN), and 275-298 (LRKL…VFDH). Residue Asn-202 is glycosylated (N-linked (GlcNAc...) asparagine). Disulfide bonds link Cys-314-Cys-339 and Cys-316-Cys-360. The LRRCT domain occupies 338–361 (MCQGPEQVRGMAVRELNMNLLSCP). The span at 372–396 (PAPSTVSPTTQSPTVSVPSPSRGSV) shows a compositional bias: low complexity. The segment at 372-413 (PAPSTVSPTTQSPTVSVPSPSRGSVPPAPAPSKLPTIPDWDG) is disordered. In terms of domain architecture, Fibronectin type-III spans 419–517 (PPISERIQLS…ICSEATTHAS (99 aa)). Residues 541–561 (FLLAGLIGGAVIFVLVVLLSV) traverse the membrane as a helical segment. Residues 562–660 (FCWHMHKKGR…SVPDLEHCHT (99 aa)) are Cytoplasmic-facing.

As to quaternary structure, self-associates (via leucine-rich repeats), giving rise to homooligomers. Interacts with FGFR1. Interacts with FGFR2. Interacts (via extracellular domain) with ADGRL1/LPHN1. Interacts (via extracellular domain) with ADGRL3 (via olfactomedin-like domain). Interacts (via extracellular domain) with UNC5D (via the first Ig-like domain). Can also interact (via extracellular domain) with UNC5B, but with much lower affinity. Interacts (via extracellular domain) with FN1. Post-translationally, N-glycosylated. Proteolytic cleavage in the juxtamembrane region gives rise to a soluble ectodomain. Cleavage is probably effected by a metalloprotease. In terms of tissue distribution, detected in brain (at protein level).

The protein resides in the cell membrane. The protein localises to the endoplasmic reticulum membrane. Its subcellular location is the synapse. It localises to the synaptosome. It is found in the cell junction. The protein resides in the focal adhesion. The protein localises to the secreted. Its subcellular location is the extracellular space. It localises to the extracellular matrix. It is found in the microsome membrane. Functions in cell-cell adhesion, cell migration and axon guidance. Mediates cell-cell adhesion via its interactions with ADGRL3 and probably also other latrophilins that are expressed at the surface of adjacent cells. May play a role in the migration of cortical neurons during brain development via its interaction with UNC5D. Mediates axon growth cone collapse and plays a repulsive role in neuron guidance via its interaction with UNC5D, and possibly also other UNC-5 family members. Plays a role in fibroblast growth factor-mediated signaling cascades. Required for normal organization of the cardiac basement membrane during embryogenesis, and for normal embryonic epicardium and heart morphogenesis. This chain is Leucine-rich repeat transmembrane protein FLRT2, found in Rattus norvegicus (Rat).